A 227-amino-acid polypeptide reads, in one-letter code: Cytochrome c biogenesis ATP-binding export protein CcmA (227 aa).

The ABC transporter domain occupies 26–227; it reads LAASGLGFSR…ARTLRLDARS (202 aa). 58–65 contributes to the ATP binding site; the sequence is GANGSGKT.

The protein belongs to the ABC transporter superfamily. CcmA exporter (TC 3.A.1.107) family. The complex is composed of two ATP-binding proteins (CcmA) and two transmembrane proteins (CcmB).

The protein localises to the cell inner membrane. It carries out the reaction heme b(in) + ATP + H2O = heme b(out) + ADP + phosphate + H(+). Part of the ABC transporter complex CcmAB involved in the biogenesis of c-type cytochromes; once thought to export heme, this seems not to be the case, but its exact role is uncertain. Responsible for energy coupling to the transport system. The chain is Cytochrome c biogenesis ATP-binding export protein CcmA from Cupriavidus necator (strain ATCC 17699 / DSM 428 / KCTC 22496 / NCIMB 10442 / H16 / Stanier 337) (Ralstonia eutropha).